The sequence spans 253 residues: Ubiquinone biosynthesis O-methyltransferase (253 aa).

S-adenosyl-L-methionine contacts are provided by R41, G72, D93, and M136.

The protein belongs to the methyltransferase superfamily. UbiG/COQ3 family.

The catalysed reaction is a 3-demethylubiquinol + S-adenosyl-L-methionine = a ubiquinol + S-adenosyl-L-homocysteine + H(+). It carries out the reaction a 3-(all-trans-polyprenyl)benzene-1,2-diol + S-adenosyl-L-methionine = a 2-methoxy-6-(all-trans-polyprenyl)phenol + S-adenosyl-L-homocysteine + H(+). Its pathway is cofactor biosynthesis; ubiquinone biosynthesis. In terms of biological role, O-methyltransferase that catalyzes the 2 O-methylation steps in the ubiquinone biosynthetic pathway. The chain is Ubiquinone biosynthesis O-methyltransferase from Chelativorans sp. (strain BNC1).